A 68-amino-acid chain; its full sequence is uncharacterized protein (68 aa).

The tract at residues 1–20 is disordered; that stretch reads MYKQKKKNHPFQCKKKKKKK. A helical membrane pass occupies residues 27–44; that stretch reads IKLLFNYFLFFNFIITTF.

Its subcellular location is the membrane. This is an uncharacterized protein from Dictyostelium discoideum (Social amoeba).